The following is a 397-amino-acid chain: Bifunctional enzyme IspD/IspF (397 aa).

The segment at 1 to 233 is 2-C-methyl-D-erythritol 4-phosphate cytidylyltransferase; that stretch reads MCAKKYKIAA…KLLFEEPKFR (233 aa). Positions 233-397 are 2-C-methyl-D-erythritol 2,4-cyclodiphosphate synthase; the sequence is RVGAGYDIHK…VLLHTNFYWK (165 aa). A divalent metal cation-binding residues include D239 and H241. Residues 239 to 241 and 270 to 271 contribute to the 4-CDP-2-C-methyl-D-erythritol 2-phosphate site; these read DIH and HS. H278 is an a divalent metal cation binding site. 4-CDP-2-C-methyl-D-erythritol 2-phosphate-binding positions include 292–294, 368–371, Y375, and R378; these read DIG and TTAE.

In the N-terminal section; belongs to the IspD/TarI cytidylyltransferase family. IspD subfamily. It in the C-terminal section; belongs to the IspF family. The cofactor is a divalent metal cation.

It catalyses the reaction 2-C-methyl-D-erythritol 4-phosphate + CTP + H(+) = 4-CDP-2-C-methyl-D-erythritol + diphosphate. It carries out the reaction 4-CDP-2-C-methyl-D-erythritol 2-phosphate = 2-C-methyl-D-erythritol 2,4-cyclic diphosphate + CMP. Its pathway is isoprenoid biosynthesis; isopentenyl diphosphate biosynthesis via DXP pathway; isopentenyl diphosphate from 1-deoxy-D-xylulose 5-phosphate: step 2/6. The protein operates within isoprenoid biosynthesis; isopentenyl diphosphate biosynthesis via DXP pathway; isopentenyl diphosphate from 1-deoxy-D-xylulose 5-phosphate: step 4/6. Bifunctional enzyme that catalyzes the formation of 4-diphosphocytidyl-2-C-methyl-D-erythritol from CTP and 2-C-methyl-D-erythritol 4-phosphate (MEP) (IspD), and catalyzes the conversion of 4-diphosphocytidyl-2-C-methyl-D-erythritol 2-phosphate (CDP-ME2P) to 2-C-methyl-D-erythritol 2,4-cyclodiphosphate (ME-CPP) with a corresponding release of cytidine 5-monophosphate (CMP) (IspF). The sequence is that of Bifunctional enzyme IspD/IspF from Wolbachia pipientis wMel.